Here is a 239-residue protein sequence, read N- to C-terminus: tRNA (guanine-N(7)-)-methyltransferase (239 aa).

The S-adenosyl-L-methionine site is built by Glu-69, Glu-94, Asp-121, and Asp-144. Residue Asp-144 is part of the active site. Residue Lys-148 participates in substrate binding. Residues 150–155 form an interaction with RNA region; it reads RHNKRR. Substrate is bound by residues Asp-180 and 217 to 220; that span reads TKFE.

This sequence belongs to the class I-like SAM-binding methyltransferase superfamily. TrmB family. As to quaternary structure, monomer.

It catalyses the reaction guanosine(46) in tRNA + S-adenosyl-L-methionine = N(7)-methylguanosine(46) in tRNA + S-adenosyl-L-homocysteine. It participates in tRNA modification; N(7)-methylguanine-tRNA biosynthesis. Catalyzes the formation of N(7)-methylguanine at position 46 (m7G46) in tRNA. The protein is tRNA (guanine-N(7)-)-methyltransferase of Escherichia coli O6:K15:H31 (strain 536 / UPEC).